Here is a 426-residue protein sequence, read N- to C-terminus: 5-aminovalerate aminotransferase DavT (426 aa).

Pyridoxal 5'-phosphate is bound by residues 112–113 (GS), Tyr139, and 240–243 (DEVQ). The residue at position 269 (Lys269) is an N6-(pyridoxal phosphate)lysine. Thr298 contacts pyridoxal 5'-phosphate.

It belongs to the class-III pyridoxal-phosphate-dependent aminotransferase family. Pyridoxal 5'-phosphate serves as cofactor.

It carries out the reaction 5-aminopentanoate + 2-oxoglutarate = 5-oxopentanoate + L-glutamate. Catalyzes the conversion of 5-aminovalerate to 5-oxopentanoate. This Pseudomonas aeruginosa (strain ATCC 15692 / DSM 22644 / CIP 104116 / JCM 14847 / LMG 12228 / 1C / PRS 101 / PAO1) protein is 5-aminovalerate aminotransferase DavT (davT).